The following is an 87-amino-acid chain: Small ribosomal subunit protein bS20 (87 aa).

This sequence belongs to the bacterial ribosomal protein bS20 family.

Binds directly to 16S ribosomal RNA. The polypeptide is Small ribosomal subunit protein bS20 (Brachyspira hyodysenteriae (strain ATCC 49526 / WA1)).